The chain runs to 765 residues: Dipeptidyl peptidase 4 (765 aa).

Over 1–6 (MKTPWK) the chain is Cytoplasmic. A helical; Signal-anchor for type II membrane protein membrane pass occupies residues 7-29 (VLLGLLAIAALVTVITVPVVLLT). The Extracellular segment spans residues 30-765 (KGNDASTDSR…HFLKQCFSLL (736 aa)). 9 N-linked (GlcNAc...) asparagine glycosylation sites follow: N84, N91, N149, N218, N228, N271, N280, N320, and N392. 3 disulfide bridges follow: C384/C393, C443/C446, and C453/C471. N495 carries an N-linked (GlcNAc...) asparagine glycan. S629 acts as the Charge relay system in catalysis. The cysteines at positions 648 and 761 are disulfide-linked. N684 carries N-linked (GlcNAc...) asparagine glycosylation. Residues D707 and H739 each act as charge relay system in the active site.

It belongs to the peptidase S9B family. DPPIV subfamily. Monomer. Homodimer. Heterodimer with Seprase (FAP). Requires homodimerization for optimal dipeptidyl peptidase activity and T-cell costimulation. Found in a membrane raft complex, at least composed of BCL10, CARD11, DPP4 and IKBKB. Associates with collagen. Interacts with PTPRC; the interaction is enhanced in an interleukin-12-dependent manner in activated lymphocytes. Interacts (via extracellular domain) with ADA; does not inhibit its dipeptidyl peptidase activity. Interacts with CAV1 (via the N-terminus); the interaction is direct. Interacts (via cytoplasmic tail) with CARD11 (via PDZ domain); its homodimerization is necessary for interaction with CARD11. Interacts with IGF2R; the interaction is direct. Interacts with GPC3. Post-translationally, the soluble form (Dipeptidyl peptidase 4 soluble form also named SDPP) derives from the membrane form (Dipeptidyl peptidase 4 membrane form also named MDPP) by proteolytic processing. N- and O-Glycosylated. In terms of processing, phosphorylated. Mannose 6-phosphate residues in the carbohydrate moiety are necessary for interaction with IGF2R in activated T-cells. Mannose 6-phosphorylation is induced during T-cell activation. As to expression, intestinal epithelium, dendritic cells and several immune system tissues.

It localises to the secreted. The protein resides in the cell membrane. The protein localises to the apical cell membrane. It is found in the cell projection. Its subcellular location is the invadopodium membrane. It localises to the lamellipodium membrane. The protein resides in the cell junction. The protein localises to the membrane raft. The enzyme catalyses Release of an N-terminal dipeptide, Xaa-Yaa-|-Zaa-, from a polypeptide, preferentially when Yaa is Pro, provided Zaa is neither Pro nor hydroxyproline.. Its activity is regulated as follows. Inhibited by GPC3 and diprotin A. Cell surface glycoprotein receptor involved in the costimulatory signal essential for T-cell receptor (TCR)-mediated T-cell activation. Acts as a positive regulator of T-cell coactivation, by binding at least ADA, CAV1, IGF2R, and PTPRC. Its binding to CAV1 and CARD11 induces T-cell proliferation and NF-kappa-B activation in a T-cell receptor/CD3-dependent manner. Its interaction with ADA also regulates lymphocyte-epithelial cell adhesion. In association with FAP is involved in the pericellular proteolysis of the extracellular matrix (ECM), the migration and invasion of endothelial cells into the ECM. May be involved in the promotion of lymphatic endothelial cells adhesion, migration and tube formation. When overexpressed, enhanced cell proliferation, a process inhibited by GPC3. Also acts as a serine exopeptidase with a dipeptidyl peptidase activity that regulates various physiological processes by cleaving peptides in the circulation, including many chemokines, mitogenic growth factors, neuropeptides and peptide hormones. Removes N-terminal dipeptides sequentially from polypeptides having unsubstituted N-termini provided that the penultimate residue is proline. This is Dipeptidyl peptidase 4 (DPP4) from Bos taurus (Bovine).